The chain runs to 79 residues: D-alanyl carrier protein (79 aa).

The 77-residue stretch at 1-77 folds into the Carrier domain; that stretch reads MDVKAEVIEI…KIVEGVTELR (77 aa). An O-(pantetheine 4'-phosphoryl)serine modification is found at serine 35.

It belongs to the DltC family. In terms of processing, 4'-phosphopantetheine is transferred from CoA to a specific serine of apo-DCP.

The protein localises to the cytoplasm. Its pathway is cell wall biogenesis; lipoteichoic acid biosynthesis. Functionally, carrier protein involved in the D-alanylation of lipoteichoic acid (LTA). The loading of thioester-linked D-alanine onto DltC is catalyzed by D-alanine--D-alanyl carrier protein ligase DltA. The DltC-carried D-alanyl group is further transferred to cell membrane phosphatidylglycerol (PG) by forming an ester bond, probably catalyzed by DltD. D-alanylation of LTA plays an important role in modulating the properties of the cell wall in Gram-positive bacteria, influencing the net charge of the cell wall. This Streptococcus gordonii (strain Challis / ATCC 35105 / BCRC 15272 / CH1 / DL1 / V288) protein is D-alanyl carrier protein.